Reading from the N-terminus, the 344-residue chain is MRIELLNTPVDAVELRIEDQIRPRRMEDFTGQQRLTDNLKVFISAARMRGDALDHVLLSGPPGLGKTTLAHIIAEEMGGSLKATSGPMLDKAGNLAGILTSLQKGDVLFIDEIHRMPPAVEEYLYSAMEDFRIDIMLDSGPSARAVQLKVEPFTLVGATTRSGLLTAPLRARFGISNRFDYYPPELLETILMRSSTILGIGIERDAASEIAGRSRGTPRIANRLLRRARDFAQVDGMEIISRPTAMKTLDSLEIDEEGLDEMDKKIMDAVVNRFSGGPVGVGSLAVSVGEEQDTIEEVYEPYLIQAGYLSRTPRGRVATQRALLRFSDGSSALRGTLFDGQEHV.

Residues 1-182 are large ATPase domain (RuvB-L); that stretch reads MRIELLNTPV…FGISNRFDYY (182 aa). ATP is bound by residues I21, R22, G63, K66, T67, T68, 129-131, R172, Y182, and R219; that span reads EDF. T67 provides a ligand contact to Mg(2+). Residues 183 to 253 are small ATPAse domain (RuvB-S); sequence PPELLETILM…TAMKTLDSLE (71 aa). The segment at 256-344 is head domain (RuvB-H); sequence EEGLDEMDKK…GTLFDGQEHV (89 aa). Residues R311 and R316 each contribute to the DNA site.

The protein belongs to the RuvB family. Homohexamer. Forms an RuvA(8)-RuvB(12)-Holliday junction (HJ) complex. HJ DNA is sandwiched between 2 RuvA tetramers; dsDNA enters through RuvA and exits via RuvB. An RuvB hexamer assembles on each DNA strand where it exits the tetramer. Each RuvB hexamer is contacted by two RuvA subunits (via domain III) on 2 adjacent RuvB subunits; this complex drives branch migration. In the full resolvosome a probable DNA-RuvA(4)-RuvB(12)-RuvC(2) complex forms which resolves the HJ.

The protein resides in the cytoplasm. The catalysed reaction is ATP + H2O = ADP + phosphate + H(+). Its function is as follows. The RuvA-RuvB-RuvC complex processes Holliday junction (HJ) DNA during genetic recombination and DNA repair, while the RuvA-RuvB complex plays an important role in the rescue of blocked DNA replication forks via replication fork reversal (RFR). RuvA specifically binds to HJ cruciform DNA, conferring on it an open structure. The RuvB hexamer acts as an ATP-dependent pump, pulling dsDNA into and through the RuvAB complex. RuvB forms 2 homohexamers on either side of HJ DNA bound by 1 or 2 RuvA tetramers; 4 subunits per hexamer contact DNA at a time. Coordinated motions by a converter formed by DNA-disengaged RuvB subunits stimulates ATP hydrolysis and nucleotide exchange. Immobilization of the converter enables RuvB to convert the ATP-contained energy into a lever motion, pulling 2 nucleotides of DNA out of the RuvA tetramer per ATP hydrolyzed, thus driving DNA branch migration. The RuvB motors rotate together with the DNA substrate, which together with the progressing nucleotide cycle form the mechanistic basis for DNA recombination by continuous HJ branch migration. Branch migration allows RuvC to scan DNA until it finds its consensus sequence, where it cleaves and resolves cruciform DNA. The chain is Holliday junction branch migration complex subunit RuvB from Chlorobium luteolum (strain DSM 273 / BCRC 81028 / 2530) (Pelodictyon luteolum).